Reading from the N-terminus, the 334-residue chain is Biotin synthase (334 aa).

The region spanning 54 to 281 (QAIQLSTLLS…KSYVRLSAGR (228 aa)) is the Radical SAM core domain. Residues C69, C73, and C76 each contribute to the [4Fe-4S] cluster site. C113, C144, C204, and R276 together coordinate [2Fe-2S] cluster.

The protein belongs to the radical SAM superfamily. Biotin synthase family. As to quaternary structure, homodimer. [4Fe-4S] cluster serves as cofactor. [2Fe-2S] cluster is required as a cofactor.

The catalysed reaction is (4R,5S)-dethiobiotin + (sulfur carrier)-SH + 2 reduced [2Fe-2S]-[ferredoxin] + 2 S-adenosyl-L-methionine = (sulfur carrier)-H + biotin + 2 5'-deoxyadenosine + 2 L-methionine + 2 oxidized [2Fe-2S]-[ferredoxin]. Its pathway is cofactor biosynthesis; biotin biosynthesis; biotin from 7,8-diaminononanoate: step 2/2. Functionally, catalyzes the conversion of dethiobiotin (DTB) to biotin by the insertion of a sulfur atom into dethiobiotin via a radical-based mechanism. In Haemophilus ducreyi (strain 35000HP / ATCC 700724), this protein is Biotin synthase.